A 435-amino-acid chain; its full sequence is ATP-dependent protease ATPase subunit HslU (435 aa).

Residues I18, 60–65 (GVGKTE), D248, E313, and R385 contribute to the ATP site.

Belongs to the ClpX chaperone family. HslU subfamily. As to quaternary structure, a double ring-shaped homohexamer of HslV is capped on each side by a ring-shaped HslU homohexamer. The assembly of the HslU/HslV complex is dependent on binding of ATP.

It localises to the cytoplasm. ATPase subunit of a proteasome-like degradation complex; this subunit has chaperone activity. The binding of ATP and its subsequent hydrolysis by HslU are essential for unfolding of protein substrates subsequently hydrolyzed by HslV. HslU recognizes the N-terminal part of its protein substrates and unfolds these before they are guided to HslV for hydrolysis. This Rhizobium etli (strain CIAT 652) protein is ATP-dependent protease ATPase subunit HslU.